A 319-amino-acid polypeptide reads, in one-letter code: tRNA U34 carboxymethyltransferase (319 aa).

Carboxy-S-adenosyl-L-methionine is bound by residues K88, W102, K107, G126, L176 to E177, M192, Y196, and R311.

Belongs to the class I-like SAM-binding methyltransferase superfamily. CmoB family. As to quaternary structure, homotetramer.

The enzyme catalyses carboxy-S-adenosyl-L-methionine + 5-hydroxyuridine(34) in tRNA = 5-carboxymethoxyuridine(34) in tRNA + S-adenosyl-L-homocysteine + H(+). Catalyzes carboxymethyl transfer from carboxy-S-adenosyl-L-methionine (Cx-SAM) to 5-hydroxyuridine (ho5U) to form 5-carboxymethoxyuridine (cmo5U) at position 34 in tRNAs. The protein is tRNA U34 carboxymethyltransferase of Pseudomonas syringae pv. syringae (strain B728a).